A 566-amino-acid chain; its full sequence is NAD-dependent malic enzyme 3 (566 aa).

Tyr105 (proton donor) is an active-site residue. Lys178 (proton acceptor) is an active-site residue. A divalent metal cation-binding residues include Glu249, Asp250, and Asp273. Residues 306-309 (AGTA), Asn423, and Asn468 contribute to the NAD(+) site.

This sequence belongs to the malic enzymes family. Requires Mg(2+) as cofactor. The cofactor is Mn(2+).

The catalysed reaction is (S)-malate + NAD(+) = pyruvate + CO2 + NADH. The enzyme catalyses oxaloacetate + H(+) = pyruvate + CO2. In terms of biological role, catalyzes the decarboxylation of malate to pyruvate. Can use NAD and NADP, but with a strong preference for NAD. Can also catalyze the decarboxylation of oxaloacetate. Involved in keeping the ATP levels high. The chain is NAD-dependent malic enzyme 3 (malS) from Bacillus subtilis (strain 168).